A 460-amino-acid chain; its full sequence is Argininosuccinate lyase (460 aa).

Belongs to the lyase 1 family. Argininosuccinate lyase subfamily.

Its subcellular location is the cytoplasm. The enzyme catalyses 2-(N(omega)-L-arginino)succinate = fumarate + L-arginine. It functions in the pathway amino-acid biosynthesis; L-arginine biosynthesis; L-arginine from L-ornithine and carbamoyl phosphate: step 3/3. The sequence is that of Argininosuccinate lyase from Pelotomaculum thermopropionicum (strain DSM 13744 / JCM 10971 / SI).